Consider the following 165-residue polypeptide: MDIAHDLQSIGAQEQALVFPQFDPARAWALGNRMHALATARGHAIAIDIATFGQPLFFAALAGATPDNADWVRRKRNVVAHFRRSSYAIGLRMQQAGATLADKHGLPISEYSPHGGSFPLTVAGAGVIGSITASGLPQRADHEFVVEALCAELGHDYAVLALERS.

The protein belongs to the UPF0303 family.

This is UPF0303 protein Bcep1808_1522 from Burkholderia vietnamiensis (strain G4 / LMG 22486) (Burkholderia cepacia (strain R1808)).